A 142-amino-acid chain; its full sequence is AP-2 complex subunit sigma (142 aa).

Belongs to the adaptor complexes small subunit family. Adaptor protein complex 2 (AP-2) is a heterotetramer composed of two large adaptins (alpha-type and beta-type subunits), a medium adaptin (mu-type subunit AP50) and a small adaptin (sigma-type subunit AP17).

The protein resides in the cell membrane. Its subcellular location is the membrane. It is found in the coated pit. Functionally, component of the adaptor complexes which link clathrin to receptors in coated vesicles. Clathrin-associated protein complexes are believed to interact with the cytoplasmic tails of membrane proteins, leading to their selection and concentration. This is AP-2 complex subunit sigma (ap2s1) from Dictyostelium discoideum (Social amoeba).